The following is a 148-amino-acid chain: MSDTPFWQRKTLDEMTDAEWESLCDGCGQCCLHKLMDEDTDEIYFTNVACRQLNIKTCQCRHYERRFEFEPDCIKLTRENLPDFEWLPMTCAYRLLAEGKPLPTWHPLLTGSKAAMHGERISVRHIAVKESEVRDWQDHILNKPSWAE.

Belongs to the UPF0260 family.

The sequence is that of UPF0260 protein YcgN from Salmonella paratyphi A (strain AKU_12601).